Here is a 129-residue protein sequence, read N- to C-terminus: Large ribosomal subunit protein uL14m (129 aa).

This sequence belongs to the universal ribosomal protein uL14 family.

Its subcellular location is the mitochondrion. This Acanthamoeba castellanii (Amoeba) protein is Large ribosomal subunit protein uL14m (RPL14).